Here is a 546-residue protein sequence, read N- to C-terminus: MSKDPGRILIFDTTLRDGEQSPGASLNLEEKLAIAHQLARLGVDVIEAGFPFASPGDFKAVNKIANAVGKENGPIICGLARASKGDIKACYEAVSPAPKKRIHTFIATSDIHLKHKLKKSRKDVLQIVPEMVNYAKSLVDDIEFSCEDASRSDPDFLYEVIQLAISAGATTINIPDTVGFTTPSEFGNLIADINKNVPNINEAVISVHGHNDLGLAVANFLEAVKNGARQLECTINGIGERAGNASLEELVMALHVRKSFFNSFFKRNPDSPTPLTAIRTEEITKTSRLVSNLTGMTVQPNKAIVGANAFAHESGIHQDGVLKNRLTYEIIDAKTVGLSDNKISLGKLSGRSAVRARLEEMGYDLSREDLNDAFARFKDLADRKREITDRDLEAIVSEQVQLPEAKFQLSLVQVSCGNASKPTATISLLNTEDNTEDTAVSIGTGPVDAVCEALNKLAKVPNELIEFSVKSVTEGIDALGEVTIRIRRDNKIYSGHSADTDVVVAAANAYVNALNRLVFSEKKNSIHPQFDSLENSTNTFLSNNAN.

The 264-residue stretch at 8-271 (ILIFDTTLRD…NSFFKRNPDS (264 aa)) folds into the Pyruvate carboxyltransferase domain. Asp-17, His-208, His-210, and Asn-244 together coordinate Mn(2+). The interval 408-546 (QLSLVQVSCG…TNTFLSNNAN (139 aa)) is regulatory domain.

It belongs to the alpha-IPM synthase/homocitrate synthase family. LeuA type 1 subfamily. As to quaternary structure, homodimer. It depends on Mn(2+) as a cofactor.

It localises to the cytoplasm. The enzyme catalyses 3-methyl-2-oxobutanoate + acetyl-CoA + H2O = (2S)-2-isopropylmalate + CoA + H(+). It functions in the pathway amino-acid biosynthesis; L-leucine biosynthesis; L-leucine from 3-methyl-2-oxobutanoate: step 1/4. Catalyzes the condensation of the acetyl group of acetyl-CoA with 3-methyl-2-oxobutanoate (2-ketoisovalerate) to form 3-carboxy-3-hydroxy-4-methylpentanoate (2-isopropylmalate). The sequence is that of 2-isopropylmalate synthase from Prochlorococcus marinus (strain AS9601).